The sequence spans 239 residues: Phosphoribosylaminoimidazole-succinocarboxamide synthase (239 aa).

Belongs to the SAICAR synthetase family.

The enzyme catalyses 5-amino-1-(5-phospho-D-ribosyl)imidazole-4-carboxylate + L-aspartate + ATP = (2S)-2-[5-amino-1-(5-phospho-beta-D-ribosyl)imidazole-4-carboxamido]succinate + ADP + phosphate + 2 H(+). Its pathway is purine metabolism; IMP biosynthesis via de novo pathway; 5-amino-1-(5-phospho-D-ribosyl)imidazole-4-carboxamide from 5-amino-1-(5-phospho-D-ribosyl)imidazole-4-carboxylate: step 1/2. The protein is Phosphoribosylaminoimidazole-succinocarboxamide synthase of Bacillus mycoides (strain KBAB4) (Bacillus weihenstephanensis).